Reading from the N-terminus, the 337-residue chain is Equatorin (337 aa).

The N-terminal stretch at M1–L20 is a signal peptide. At Q21–K183 the chain is on the lumenal side. The disordered stretch occupies residues S110–T130. Residues E117–R126 show a composition bias toward basic and acidic residues. N145 is a glycosylation site (N-linked (GlcNAc...) asparagine). The helical transmembrane segment at L184–F204 threads the bilayer. Topologically, residues A205–N337 are cytoplasmic. Residues S259–Q283 are disordered. S336 is subject to Phosphoserine.

Interacts with SNAP25. Post-translationally, highly N- and O-glycosylated; contains sialic acid. MN9 epitope is O-glycosylated. As to expression, sperm specific, including germ cells (at protein level).

The protein localises to the cytoplasmic vesicle. It localises to the secretory vesicle. The protein resides in the acrosome membrane. Its subcellular location is the acrosome inner membrane. It is found in the acrosome outer membrane. The protein localises to the nucleus. It localises to the cytoplasm. Its function is as follows. Acrosomal membrane-anchored protein involved in the process of fertilization and in acrosome biogenesis. This is Equatorin (Eqtn) from Mus musculus (Mouse).